A 623-amino-acid polypeptide reads, in one-letter code: UvrABC system protein C (623 aa).

Residues 13 to 92 (DKPGVYIMKN…IKKYKPRYNI (80 aa)) enclose the GIY-YIG domain. Residues 204-239 (NDIIRELKEEMEKASMNLDFEKAADLRDKMLAAQKV) form the UVR domain.

This sequence belongs to the UvrC family. In terms of assembly, interacts with UvrB in an incision complex.

It is found in the cytoplasm. Functionally, the UvrABC repair system catalyzes the recognition and processing of DNA lesions. UvrC both incises the 5' and 3' sides of the lesion. The N-terminal half is responsible for the 3' incision and the C-terminal half is responsible for the 5' incision. The polypeptide is UvrABC system protein C (Clostridium acetobutylicum (strain ATCC 824 / DSM 792 / JCM 1419 / IAM 19013 / LMG 5710 / NBRC 13948 / NRRL B-527 / VKM B-1787 / 2291 / W)).